Reading from the N-terminus, the 465-residue chain is Argininosuccinate lyase (465 aa).

The protein belongs to the lyase 1 family. Argininosuccinate lyase subfamily.

The protein localises to the cytoplasm. It catalyses the reaction 2-(N(omega)-L-arginino)succinate = fumarate + L-arginine. It participates in amino-acid biosynthesis; L-arginine biosynthesis; L-arginine from L-ornithine and carbamoyl phosphate: step 3/3. The protein is Argininosuccinate lyase of Desulfatibacillum aliphaticivorans.